We begin with the raw amino-acid sequence, 290 residues long: Arylamine N-acetyltransferase 2 (290 aa).

Catalysis depends on cysteine 68, which acts as the Acyl-thioester intermediate. CoA is bound by residues threonine 103 and glycine 104. 106 to 107 (IH) provides a ligand contact to substrate. Active-site residues include histidine 107 and aspartate 122. Positions 208, 214, and 287 each coordinate CoA.

This sequence belongs to the arylamine N-acetyltransferase family.

The protein resides in the cytoplasm. It carries out the reaction an arylamine + acetyl-CoA = an N-acetylarylamine + CoA. The catalysed reaction is an N-hydroxyarylamine + acetyl-CoA = an N-acetoxyarylamine + CoA. In terms of biological role, catalyzes the N- or O-acetylation of various arylamine and heterocyclic amine substrates, and participates in the detoxification of a plethora of hydrazine and arylamine drugs. This chain is Arylamine N-acetyltransferase 2 (NAT2), found in Macaca mulatta (Rhesus macaque).